The primary structure comprises 214 residues: Alpha-S1-casein (214 aa).

The signal sequence occupies residues 1–15; the sequence is MKLLILTCLVAVALA. Serine 27 carries the post-translational modification Phosphoserine; in allele A. At serine 56 the chain carries Phosphoserine; in allele C. Phosphoserine occurs at positions 61 and 63. Positions 69–91 are disordered; it reads MEDAKQMKAGSSSSSEEIVPNSA. Residue serine 79 is modified to Phosphoserine; in alleles A and C. Position 80 is a phosphoserine (serine 80). Serine 81 carries the phosphoserine; in alleles A and C modification. Serine 82 bears the Phosphoserine mark. Position 83 is a phosphoserine; in alleles A and C (serine 83). At serine 90 the chain carries Phosphoserine. The interval 105-111 is opioid-like peptide sequence; that stretch reads RYLGYLE. Serine 130 carries the post-translational modification Phosphoserine.

It belongs to the alpha-casein family. Mammary gland specific. Secreted in milk.

It is found in the secreted. Important role in the capacity of milk to transport calcium phosphate. The polypeptide is Alpha-S1-casein (CSN1S1) (Ovis aries (Sheep)).